A 253-amino-acid chain; its full sequence is PAXIP1-associated glutamate-rich protein 1A (253 aa).

Disordered stretches follow at residues 1 to 108 (MSLA…MPPP) and 126 to 253 (LQAE…QRKY). Residues 45–66 (KAEEEGKGSQEEAGREGSRPEE) show a composition bias toward basic and acidic residues. Residues 115–159 (YELLATQGTLELQAEILPRRPPTPEAQSEEERSDEEPEAKEEEEE) form a sufficient for interaction with NCOA1 region. Position 137 is a phosphothreonine (T137). Over residues 141 to 158 (QSEEERSDEEPEAKEEEE) the composition is skewed to acidic residues. Residues S142 and S147 each carry the phosphoserine modification. The interval 160–253 (KPHMPTEFDF…NSLFPRQRKY (94 aa)) is sufficient for interaction with ESR1. The segment covering 194 to 222 (QKREARLDKVLSDMKRHKKLEEQILRTGR) has biased composition (basic and acidic residues). Phosphoserine is present on S236. Positions 238-247 (PLRSSGNSLF) are enriched in polar residues.

Component of the KMT2 family MLL2/MLL3 complex, at least composed of the histone methyltransferases KMT2D and/or KMT2C, the common subunits ASH2L, RBBP5, WDR5 and DPY30, and the complex type-specific subunits PAXIP1/PTIP, PAGR1, NCOA6 and KDM6A; PAXIP1 is required for the association with the MLL2/MLL3 complex. Forms a constitutive complex with PAXIP1/PTIP independently of the MLL2/MLL3 complex. Interacts with NCOA1, ESR1, NR3C1, AR.

It is found in the nucleus. Its function is as follows. Its association with the histone methyltransferase MLL2/MLL3 complex is suggesting a role in epigenetic transcriptional activation. However, in association with PAXIP1/PTIP is proposed to function at least in part independently of the MLL2/MLL3 complex. Proposed to be recruited by PAXIP1 to sites of DNA damage where the PAGR1:PAXIP1 complex is required for cell survival in response to DNA damage independently of the MLL2/MLL3 complex. However, its function in DNA damage has been questioned. During immunoglobulin class switching in activated B-cells is involved in transcription regulation of downstream switch regions at the immunoglobulin heavy-chain (Igh) locus independently of the MLL2/MLL3 complex. Involved in both estrogen receptor-regulated gene transcription and estrogen-stimulated G1/S cell-cycle transition. Acts as a transcriptional cofactor for nuclear hormone receptors. Inhibits the induction properties of several steroid receptors such as NR3C1, AR and PPARG; the mechanism of inhibition appears to be gene-dependent. May be involved in the regulation of the BMP pathway in extraembryonic development. The chain is PAXIP1-associated glutamate-rich protein 1A from Mus musculus (Mouse).